An 87-amino-acid polypeptide reads, in one-letter code: Pyocin-S2 immunity protein (87 aa).

Belongs to the colicins ColE2/ColE8/ColE9 and pyocins S1/S2 family.

In Pseudomonas aeruginosa (strain ATCC 15692 / DSM 22644 / CIP 104116 / JCM 14847 / LMG 12228 / 1C / PRS 101 / PAO1), this protein is Pyocin-S2 immunity protein (imm2).